The primary structure comprises 116 residues: MAGLLKKTTGLVGLAVCETPHERLKILYTKILDVLGHIPKNAAYRKYTEQITNEKLSMVKAEPDVKKLEERLQGGQIEEVILQAENELSLARKMIQWKPWEPLVEEPPASQWKWPI.

Ala2 is subject to N-acetylalanine. N6-acetyllysine is present on residues Lys30, Lys46, and Lys60. Phosphoserine is present on Ser89. Lys98 is subject to N6-acetyllysine; alternate. Lys98 is subject to N6-succinyllysine; alternate.

Belongs to the complex I NDUFA5 subunit family. In terms of assembly, complex I is composed of 45 different subunits.

The protein resides in the mitochondrion inner membrane. In terms of biological role, accessory subunit of the mitochondrial membrane respiratory chain NADH dehydrogenase (Complex I), that is believed not to be involved in catalysis. Complex I functions in the transfer of electrons from NADH to the respiratory chain. The immediate electron acceptor for the enzyme is believed to be ubiquinone. The protein is NADH dehydrogenase [ubiquinone] 1 alpha subcomplex subunit 5 (NDUFA5) of Bos taurus (Bovine).